The sequence spans 180 residues: uncharacterized protein (180 aa).

The protein resides in the mitochondrion. This is an uncharacterized protein from Marchantia polymorpha (Common liverwort).